The following is a 229-amino-acid chain: Acetylornithine aminotransferase (229 aa).

Residues 95-96 (GA) and Phe-122 each bind pyridoxal 5'-phosphate. Arg-125 provides a ligand contact to N(2)-acetyl-L-ornithine. 208-211 (DEIQ) serves as a coordination point for pyridoxal 5'-phosphate.

The protein belongs to the class-III pyridoxal-phosphate-dependent aminotransferase family. ArgD subfamily. In terms of assembly, homodimer. Requires pyridoxal 5'-phosphate as cofactor.

The protein localises to the cytoplasm. It catalyses the reaction N(2)-acetyl-L-ornithine + 2-oxoglutarate = N-acetyl-L-glutamate 5-semialdehyde + L-glutamate. The protein operates within amino-acid biosynthesis; L-arginine biosynthesis; N(2)-acetyl-L-ornithine from L-glutamate: step 4/4. In Bacillus amyloliquefaciens (Bacillus velezensis), this protein is Acetylornithine aminotransferase (argD).